Consider the following 739-residue polypeptide: Probable beta-glucosidase L (739 aa).

The first 17 residues, 1–17 (MQTLFLSLLAAAVTVHA), serve as a signal peptide directing secretion. N-linked (GlcNAc...) asparagine glycosylation is found at N40 and N224. Residue D252 is part of the active site. N398 is a glycosylation site (N-linked (GlcNAc...) asparagine).

Belongs to the glycosyl hydrolase 3 family.

Its subcellular location is the secreted. It carries out the reaction Hydrolysis of terminal, non-reducing beta-D-glucosyl residues with release of beta-D-glucose.. It participates in glycan metabolism; cellulose degradation. Functionally, beta-glucosidases are one of a number of cellulolytic enzymes involved in the degradation of cellulosic biomass. Catalyzes the last step releasing glucose from the inhibitory cellobiose. The polypeptide is Probable beta-glucosidase L (bglL) (Aspergillus fumigatus (strain ATCC MYA-4609 / CBS 101355 / FGSC A1100 / Af293) (Neosartorya fumigata)).